A 479-amino-acid chain; its full sequence is Sulfate adenylyltransferase subunit 1 (479 aa).

Residues 25–239 (KSLLRFLTCG…EVLETVDIQR (215 aa)) enclose the tr-type G domain. A G1 region spans residues 34-41 (GSVDDGKS). Residue 34-41 (GSVDDGKS) participates in GTP binding. Residues 92–96 (GITID) are G2. The interval 113-116 (DTPG) is G3. GTP contacts are provided by residues 113-117 (DTPGH) and 168-171 (NKMD). Positions 168-171 (NKMD) are G4. The G5 stretch occupies residues 206–208 (SAL).

It belongs to the TRAFAC class translation factor GTPase superfamily. Classic translation factor GTPase family. CysN/NodQ subfamily. Heterodimer composed of CysD, the smaller subunit, and CysN.

The enzyme catalyses sulfate + ATP + H(+) = adenosine 5'-phosphosulfate + diphosphate. Its pathway is sulfur metabolism; hydrogen sulfide biosynthesis; sulfite from sulfate: step 1/3. In terms of biological role, with CysD forms the ATP sulfurylase (ATPS) that catalyzes the adenylation of sulfate producing adenosine 5'-phosphosulfate (APS) and diphosphate, the first enzymatic step in sulfur assimilation pathway. APS synthesis involves the formation of a high-energy phosphoric-sulfuric acid anhydride bond driven by GTP hydrolysis by CysN coupled to ATP hydrolysis by CysD. This is Sulfate adenylyltransferase subunit 1 from Salmonella agona (strain SL483).